Reading from the N-terminus, the 336-residue chain is Ferredoxin--NADP reductase (336 aa).

Residues Thr18, Glu37, Gln45, Tyr50, Val92, Phe127, Asp290, and Ser331 each contribute to the FAD site.

The protein belongs to the ferredoxin--NADP reductase type 2 family. As to quaternary structure, homodimer. FAD is required as a cofactor.

The enzyme catalyses 2 reduced [2Fe-2S]-[ferredoxin] + NADP(+) + H(+) = 2 oxidized [2Fe-2S]-[ferredoxin] + NADPH. This is Ferredoxin--NADP reductase from Symbiobacterium thermophilum (strain DSM 24528 / JCM 14929 / IAM 14863 / T).